A 139-amino-acid chain; its full sequence is Putative pre-16S rRNA nuclease (139 aa).

The protein belongs to the YqgF nuclease family.

The protein resides in the cytoplasm. Its function is as follows. Could be a nuclease involved in processing of the 5'-end of pre-16S rRNA. This chain is Putative pre-16S rRNA nuclease, found in Rippkaea orientalis (strain PCC 8801 / RF-1) (Cyanothece sp. (strain PCC 8801)).